The sequence spans 2254 residues: Voltage-dependent T-type calcium channel subunit alpha-1G (2254 aa).

The interval 1 to 48 (MDEEEDGAGAEESGQPRSFTQLNDLSGAGGRQGPGSTEKDPGSADSEA) is disordered. The Cytoplasmic portion of the chain corresponds to 1 to 80 (MDEEEDGAGA…RSWCLRTVCN (80 aa)). Residues 15 to 24 (QPRSFTQLND) are compositionally biased toward polar residues. The stretch at 68-398 (SRPRSWCLRT…LCLVVIATQF (331 aa)) is one I repeat. Residues 81–101 (PWFERVSMLVILLNCVTLGMF) form a helical membrane-spanning segment. The Extracellular segment spans residues 102–119 (RPCEDIACDSQRCRILQA). Residues 120-141 (FDDFIFAFFAVEMVVKMVALGI) traverse the membrane as a helical segment. Residues 142-150 (FGKKCYLGD) lie on the Cytoplasmic side of the membrane. The helical transmembrane segment at 151 to 170 (TWNRLDFFIVIAGMLEYSLD) threads the bilayer. At 171–175 (LQNVS) the chain is on the extracellular side. Asparagine 173 is a glycosylation site (N-linked (GlcNAc...) asparagine). Residues 176-193 (FSAVRTVRVLRPLRAINR) traverse the membrane as a helical segment. The Cytoplasmic portion of the chain corresponds to 194–213 (VPSMRILVTLLLDTLPMLGN). The helical transmembrane segment at 214 to 234 (VLLLCFFVFFIFGIVGVQLWA) threads the bilayer. Over 235–370 (GLLRNRCFLP…YFVMDAHSFY (136 aa)) the chain is Extracellular. Residues asparagine 246, asparagine 306, asparagine 310, and asparagine 322 are each glycosylated (N-linked (GlcNAc...) asparagine). Residues 371 to 395 (NFIYFILLIIVGSFFMINLCLVVIA) form a helical membrane-spanning segment. Residues 396-744 (TQFSETKQRE…DTFRKIVDSK (349 aa)) lie on the Cytoplasmic side of the membrane. Serine 467 carries the phosphoserine modification. Positions 494-506 (LVHHHHHHHHHYH) are enriched in basic residues. Disordered regions lie at residues 494–513 (LVHH…GTLR), 525–553 (DANG…AESV), 579–598 (ASGR…TSPP), and 699–721 (DAQH…GPDA). Positions 534–545 (LPPPSTPTPSGG) are enriched in pro residues. Serine 716 is subject to Phosphoserine. The II repeat unit spans residues 730-968 (WRLICDTFRK…LLVAILVEGF (239 aa)). Residues 745–765 (YFGRGIMIAILVNTLSMGIEY) form a helical membrane-spanning segment. At 766-778 (HEQPEELTNALEI) the chain is on the extracellular side. The helical transmembrane segment at 779–800 (SNIVFTSLFALEMLLKLLVYGP) threads the bilayer. Residues 801–806 (FGYIKN) lie on the Cytoplasmic side of the membrane. The helical transmembrane segment at 807-825 (PYNIFDGVIVVISVWEIVG) threads the bilayer. Residues 826 to 833 (QQGGGLSV) are Extracellular-facing. A helical transmembrane segment spans residues 834-857 (LRTFRLMRVLKLVRFLPALQRQLV). The Cytoplasmic portion of the chain corresponds to 858–868 (VLMKTMDNVAT). The helical transmembrane segment at 869–889 (FCMLLMLFIFIFSILGMHLFG) threads the bilayer. Over 890-940 (CKFASERDGDTLPDRKNFDSLLWAIVTVFQILTQEDWNKVLYNGMASTSSW) the chain is Extracellular. The helical transmembrane segment at 941–965 (AALYFIALMTFGNYVLFNLLVAILV) threads the bilayer. The Cytoplasmic segment spans residues 966 to 1251 (EGFQAEGDAT…SRFRLLCHRI (286 aa)). The tract at residues 1024-1209 (TPMSHPKSSS…GDDDNDEGNL (186 aa)) is disordered. Low complexity-rich tracts occupy residues 1041–1052 (GSGSRRTSSSGS) and 1065–1091 (PPSA…SRNS). 2 stretches are compositionally biased toward acidic residues: residues 1117 to 1126 (ESQDEEESSE) and 1196 to 1206 (PQLDGDDDNDE). A phosphoserine mark is found at serine 1118, serine 1124, and serine 1125. The stretch at 1242-1519 (SRFRLLCHRI…MFVGVVVENF (278 aa)) is one III repeat. A helical transmembrane segment spans residues 1252 to 1274 (ITHKMFDHVVLVIIFLNCITIAM). Residues 1275 to 1292 (ERPKIDPHSAERIFLTLS) are Extracellular-facing. A helical transmembrane segment spans residues 1293–1313 (NYIFTAVFLAEMTVKVVALGW). The Cytoplasmic portion of the chain corresponds to 1314-1323 (CFGEQAYLRS). A helical membrane pass occupies residues 1324–1343 (SWNVLDGLLVLISVIDILVS). The Extracellular segment spans residues 1344 to 1357 (MVSDSGTKILGMLR). The helical transmembrane segment at 1358-1379 (VLRLLRTLRPLRVISRAQGLKL) threads the bilayer. Over 1380 to 1389 (VVETLMSSLK) the chain is Cytoplasmic. The chain crosses the membrane as a helical span at residues 1390–1413 (PIGNIVVICCAFFIIFGILGVQLF). Topologically, residues 1414 to 1490 (KGKFFVCQGE…DQQPIMNHNP (77 aa)) are extracellular. N-linked (GlcNAc...) asparagine glycans are attached at residues asparagine 1427 and asparagine 1430. Residues 1491-1516 (WMLLYFISFLLIVAFFVLNMFVGVVV) form a helical membrane-spanning segment. Residues 1517–1578 (ENFHKCRQHQ…RLLVHHLCTS (62 aa)) lie on the Cytoplasmic side of the membrane. The stretch at 1564 to 1822 (DYSRFRLLVH…VVIAVLMKHL (259 aa)) is one IV repeat. Residues 1579-1599 (HYLDLFITGVIGLNVVTMAME) traverse the membrane as a helical segment. Topologically, residues 1600–1613 (HYQQPQILDEALKI) are extracellular. A helical transmembrane segment spans residues 1614–1635 (CNYIFTVIFVFESVFKLVAFGF). Residues 1636-1642 (RRFFQDR) are Cytoplasmic-facing. The helical transmembrane segment at 1643-1661 (WNQLDLAIVLLSIMGITLE) threads the bilayer. The Extracellular portion of the chain corresponds to 1662–1675 (EIEVNLSLPINPTI). N-linked (GlcNAc...) asparagine glycosylation is present at asparagine 1666. A helical transmembrane segment spans residues 1676–1699 (IRIMRVLRIARVLKLLKMAVGMRA). Over 1700 to 1713 (LLHTVMQALPQVGN) the chain is Cytoplasmic. A helical membrane pass occupies residues 1714–1734 (LGLLFMLLFFIFAALGVELFG). Over 1735–1794 (DLECDETHPCEGLGRHATFRNFGMAFLTLFRVSTGDNWNGIMKDTLRDCDQESTCYNTVI) the chain is Extracellular. A helical transmembrane segment spans residues 1795-1822 (SPIYFVSFVLTAQFVLVNVVIAVLMKHL). Residues 1823–2254 (EESNKEAKEE…LSSDPTDMDP (432 aa)) are Cytoplasmic-facing. A disordered region spans residues 2153 to 2254 (DSGSQPRLCP…LSSDPTDMDP (102 aa)). Low complexity predominate over residues 2184 to 2193 (SPPSISIDPP). 2 stretches are compositionally biased toward polar residues: residues 2220–2232 (PSVS…TAAS) and 2240–2254 (LSLS…DMDP).

Belongs to the calcium channel alpha-1 subunit (TC 1.A.1.11) family. CACNA1G subfamily. Post-translationally, in response to raising of intracellular calcium, the T-type channels are activated by CaM-kinase II. Highly expressed in brain. Moderate expression in heart; low expression in placenta, kidney and lung.

The protein localises to the cell membrane. It localises to the cytoplasm. It catalyses the reaction Ca(2+)(in) = Ca(2+)(out). Its function is as follows. Voltage-sensitive calcium channels (VSCC) mediate the entry of calcium ions into excitable cells and are also involved in a variety of calcium-dependent processes, including muscle contraction, hormone or neurotransmitter release, gene expression, cell motility, cell division and cell death. The isoform alpha-1G gives rise to T-type calcium currents. T-type calcium channels belong to the 'low-voltage activated (LVA)' group and are strongly blocked by nickel and mibefradil. A particularity of this type of channels is an opening at quite negative potentials and a voltage-dependent inactivation. T-type channels serve pacemaking functions in both central neurons and cardiac nodal cells and support calcium signaling in secretory cells and vascular smooth muscle. They may also be involved in the modulation of firing patterns of neurons which is important for information processing as well as in cell growth processes. This is Voltage-dependent T-type calcium channel subunit alpha-1G (Cacna1g) from Rattus norvegicus (Rat).